A 73-amino-acid chain; its full sequence is uncharacterized protein (73 aa).

This is an uncharacterized protein from Ureaplasma parvum serovar 3 (strain ATCC 700970).